Consider the following 304-residue polypeptide: Large ribosomal subunit protein uL18 (304 aa).

The interval 285 to 304 is disordered; that stretch reads LNALNSSAGADDDDEEEDDE. Residues 294–304 show a composition bias toward acidic residues; it reads ADDDDEEEDDE.

Belongs to the universal ribosomal protein uL18 family. Component of the large ribosomal subunit (LSU).

The protein resides in the cytoplasm. The protein localises to the nucleus. Functionally, component of the ribosome, a large ribonucleoprotein complex responsible for the synthesis of proteins in the cell. The small ribosomal subunit (SSU) binds messenger RNAs (mRNAs) and translates the encoded message by selecting cognate aminoacyl-transfer RNA (tRNA) molecules. The large subunit (LSU) contains the ribosomal catalytic site termed the peptidyl transferase center (PTC), which catalyzes the formation of peptide bonds, thereby polymerizing the amino acids delivered by tRNAs into a polypeptide chain. The nascent polypeptides leave the ribosome through a tunnel in the LSU and interact with protein factors that function in enzymatic processing, targeting, and the membrane insertion of nascent chains at the exit of the ribosomal tunnel. The polypeptide is Large ribosomal subunit protein uL18 (RPL5A) (Oryza sativa subsp. indica (Rice)).